Here is a 413-residue protein sequence, read N- to C-terminus: Gamma-glutamyl phosphate reductase (413 aa).

The protein belongs to the gamma-glutamyl phosphate reductase family.

The protein resides in the cytoplasm. The catalysed reaction is L-glutamate 5-semialdehyde + phosphate + NADP(+) = L-glutamyl 5-phosphate + NADPH + H(+). Its pathway is amino-acid biosynthesis; L-proline biosynthesis; L-glutamate 5-semialdehyde from L-glutamate: step 2/2. Its function is as follows. Catalyzes the NADPH-dependent reduction of L-glutamate 5-phosphate into L-glutamate 5-semialdehyde and phosphate. The product spontaneously undergoes cyclization to form 1-pyrroline-5-carboxylate. The sequence is that of Gamma-glutamyl phosphate reductase from Geobacillus sp. (strain WCH70).